The sequence spans 86 residues: Small ribosomal subunit protein bS20 (86 aa).

Over residues 1 to 11 (MANIKSQIKRN) the composition is skewed to polar residues. A disordered region spans residues 1-20 (MANIKSQIKRNLTNEKRHQA).

This sequence belongs to the bacterial ribosomal protein bS20 family.

Its function is as follows. Binds directly to 16S ribosomal RNA. This Acholeplasma laidlawii (strain PG-8A) protein is Small ribosomal subunit protein bS20.